The primary structure comprises 25 residues: Small ribosomal subunit protein eS32 (25 aa).

A disordered region spans residues 1-25; that stretch reads MRDKWRKKRVRRLKRKRRKVRARSK.

This sequence belongs to the eukaryotic ribosomal protein eS32 family. As to quaternary structure, component of the small ribosomal subunit. Mature ribosomes consist of a small (40S) and a large (60S) subunit. The 40S subunit contains about 32 different proteins and 1 molecule of RNA (18S). The 60S subunit contains 45 different proteins and 3 molecules of RNA (25S, 5.8S and 5S).

The protein resides in the cytoplasm. Component of the ribosome, a large ribonucleoprotein complex responsible for the synthesis of proteins in the cell. The small ribosomal subunit (SSU) binds messenger RNAs (mRNAs) and translates the encoded message by selecting cognate aminoacyl-transfer RNA (tRNA) molecules. The large subunit (LSU) contains the ribosomal catalytic site termed the peptidyl transferase center (PTC), which catalyzes the formation of peptide bonds, thereby polymerizing the amino acids delivered by tRNAs into a polypeptide chain. The nascent polypeptides leave the ribosome through a tunnel in the LSU and interact with protein factors that function in enzymatic processing, targeting, and the membrane insertion of nascent chains at the exit of the ribosomal tunnel. The sequence is that of Small ribosomal subunit protein eS32 from Candida albicans (strain SC5314 / ATCC MYA-2876) (Yeast).